A 429-amino-acid polypeptide reads, in one-letter code: Adenylosuccinate synthetase (429 aa).

GTP-binding positions include 15–21 and 43–45; these read GDEGKGK and GHV. Residue D16 is the Proton acceptor of the active site. D16 and G43 together coordinate Mg(2+). IMP is bound by residues 16–19, 41–44, T131, R145, Q225, T240, and R304; these read DEGK and NAGH. Residue H44 is the Proton donor of the active site. 300 to 306 serves as a coordination point for substrate; sequence SNTKRPR. GTP contacts are provided by residues R306, 332–334, and 414–416; these read LLD and SVG.

It belongs to the adenylosuccinate synthetase family. As to quaternary structure, homodimer. Mg(2+) is required as a cofactor.

It localises to the cytoplasm. It carries out the reaction IMP + L-aspartate + GTP = N(6)-(1,2-dicarboxyethyl)-AMP + GDP + phosphate + 2 H(+). It participates in purine metabolism; AMP biosynthesis via de novo pathway; AMP from IMP: step 1/2. In terms of biological role, plays an important role in the de novo pathway of purine nucleotide biosynthesis. Catalyzes the first committed step in the biosynthesis of AMP from IMP. The sequence is that of Adenylosuccinate synthetase from Mesoplasma florum (strain ATCC 33453 / NBRC 100688 / NCTC 11704 / L1) (Acholeplasma florum).